We begin with the raw amino-acid sequence, 672 residues long: tRNA 5-methylaminomethyl-2-thiouridine biosynthesis bifunctional protein MnmC (672 aa).

The tRNA (mnm(5)s(2)U34)-methyltransferase stretch occupies residues 1-241 (MLKVTTAHIH…KRECLQGFKP (241 aa)). The FAD-dependent cmnm(5)s(2)U34 oxidoreductase stretch occupies residues 271–672 (IGGGISSLFS…RKLLKGTPVK (402 aa)).

This sequence in the N-terminal section; belongs to the methyltransferase superfamily. tRNA (mnm(5)s(2)U34)-methyltransferase family. It in the C-terminal section; belongs to the DAO family. FAD serves as cofactor.

It is found in the cytoplasm. The enzyme catalyses 5-aminomethyl-2-thiouridine(34) in tRNA + S-adenosyl-L-methionine = 5-methylaminomethyl-2-thiouridine(34) in tRNA + S-adenosyl-L-homocysteine + H(+). In terms of biological role, catalyzes the last two steps in the biosynthesis of 5-methylaminomethyl-2-thiouridine (mnm(5)s(2)U) at the wobble position (U34) in tRNA. Catalyzes the FAD-dependent demodification of cmnm(5)s(2)U34 to nm(5)s(2)U34, followed by the transfer of a methyl group from S-adenosyl-L-methionine to nm(5)s(2)U34, to form mnm(5)s(2)U34. This chain is tRNA 5-methylaminomethyl-2-thiouridine biosynthesis bifunctional protein MnmC, found in Mannheimia succiniciproducens (strain KCTC 0769BP / MBEL55E).